The primary structure comprises 205 residues: Red chlorophyll catabolite reductase (205 aa).

The substrate site is built by Glu39 and Asp175.

As to quaternary structure, homodimer. In terms of processing, the N-terminus is blocked. In etiolated and green primary leaves. Low amount in roots.

The protein resides in the plastid. It is found in the chloroplast stroma. The catalysed reaction is primary fluorescent chlorophyll catabolite + 2 oxidized [2Fe-2S]-[ferredoxin] = red chlorophyll catabolite + 2 reduced [2Fe-2S]-[ferredoxin] + 3 H(+). Its pathway is porphyrin-containing compound metabolism; chlorophyll degradation. Catalyzes the key reaction of chlorophyll catabolism, porphyrin macrocycle cleavage of pheophorbide a (pheide a) to a primary fluorescent catabolite (pFCC). Works in a two-step reaction with pheophorbide a oxygenase (PaO) by reducing the C20/C1 double bond of the intermediate, RCC. This Hordeum vulgare (Barley) protein is Red chlorophyll catabolite reductase (rccR).